Here is a 256-residue protein sequence, read N- to C-terminus: Enolase-phosphatase E1 (256 aa).

The Mg(2+) site is built by Asp14 and Glu16. Substrate-binding positions include 142–143 (SS) and Lys176. Asp201 is a Mg(2+) binding site.

This sequence belongs to the HAD-like hydrolase superfamily. MasA/MtnC family. As to quaternary structure, monomer. Mg(2+) serves as cofactor.

The protein localises to the cytoplasm. It is found in the nucleus. It catalyses the reaction 5-methylsulfanyl-2,3-dioxopentyl phosphate + H2O = 1,2-dihydroxy-5-(methylsulfanyl)pent-1-en-3-one + phosphate. Its pathway is amino-acid biosynthesis; L-methionine biosynthesis via salvage pathway; L-methionine from S-methyl-5-thio-alpha-D-ribose 1-phosphate: step 3/6. The protein operates within amino-acid biosynthesis; L-methionine biosynthesis via salvage pathway; L-methionine from S-methyl-5-thio-alpha-D-ribose 1-phosphate: step 4/6. Functionally, bifunctional enzyme that catalyzes the enolization of 2,3-diketo-5-methylthiopentyl-1-phosphate (DK-MTP-1-P) into the intermediate 2-hydroxy-3-keto-5-methylthiopentenyl-1-phosphate (HK-MTPenyl-1-P), which is then dephosphorylated to form the acireductone 1,2-dihydroxy-3-keto-5-methylthiopentene (DHK-MTPene). The sequence is that of Enolase-phosphatase E1 from Drosophila erecta (Fruit fly).